A 705-amino-acid chain; its full sequence is Probable iron-sulfur-binding oxidoreductase FadF (705 aa).

Helical transmembrane passes span 4–24, 71–91, 109–129, 146–166, 173–193, and 199–219; these read FLIA…YLFV, IIHV…IDFI, AFTF…GWAF, AGLV…GNGM, HGLS…SGVG, and VIFY…LVYV. 2 4Fe-4S ferredoxin-type domains span residues 268–298 and 360–391; these read QSQL…MLSP and GDVI…VDKI. 8 residues coordinate [4Fe-4S] cluster: C277, C280, C283, C287, C371, C374, C377, and C381.

[4Fe-4S] cluster serves as cofactor.

The protein resides in the cell membrane. The sequence is that of Probable iron-sulfur-binding oxidoreductase FadF (fadF) from Bacillus subtilis (strain 168).